The following is a 95-amino-acid chain: Aspartyl/glutamyl-tRNA(Asn/Gln) amidotransferase subunit C (95 aa).

Belongs to the GatC family. Heterotrimer of A, B and C subunits.

The catalysed reaction is L-glutamyl-tRNA(Gln) + L-glutamine + ATP + H2O = L-glutaminyl-tRNA(Gln) + L-glutamate + ADP + phosphate + H(+). It carries out the reaction L-aspartyl-tRNA(Asn) + L-glutamine + ATP + H2O = L-asparaginyl-tRNA(Asn) + L-glutamate + ADP + phosphate + 2 H(+). Its function is as follows. Allows the formation of correctly charged Asn-tRNA(Asn) or Gln-tRNA(Gln) through the transamidation of misacylated Asp-tRNA(Asn) or Glu-tRNA(Gln) in organisms which lack either or both of asparaginyl-tRNA or glutaminyl-tRNA synthetases. The reaction takes place in the presence of glutamine and ATP through an activated phospho-Asp-tRNA(Asn) or phospho-Glu-tRNA(Gln). This is Aspartyl/glutamyl-tRNA(Asn/Gln) amidotransferase subunit C from Caulobacter sp. (strain K31).